The chain runs to 596 residues: Uptake hydrogenase large subunit (596 aa).

Cysteine 75, cysteine 78, cysteine 575, and cysteine 578 together coordinate Ni(2+).

Belongs to the [NiFe]/[NiFeSe] hydrogenase large subunit family. In terms of assembly, heterodimer of a large and a small subunit. Ni(2+) serves as cofactor.

It localises to the cell membrane. It catalyses the reaction H2 + A = AH2. Functionally, this enzyme recycles the H(2) produced by nitrogenase to increase the production of ATP and to protect nitrogenase against inhibition or damage by O(2) under carbon- or phosphate-limited conditions. The sequence is that of Uptake hydrogenase large subunit (hupB) from Bradyrhizobium diazoefficiens (strain JCM 10833 / BCRC 13528 / IAM 13628 / NBRC 14792 / USDA 110).